The following is a 331-amino-acid chain: MQKFLSLIIVILILYNIVKLKISPDNNNLTTVEQTASNNSSTDENQTSINNEPPISLNGNLFERTVSKIVINALKTEEGKAFFENILQPLNGPINPNDYTIEVRKDLVKTLFKINTLGSGNIGPASCGHVVTVFYQISDMNNTLISEDTKTFTLGSAPVMLGLDNVIIGMMVGEAREAIIPAKYAVNNSNNIIFDDAYNYKVNVILKSILPQNFVKSNEVKIYDDEIAYRVPLLCGEKVSFNAKITRLSNGKILYDSKAKGQQIDMKIGDITYPLIFSYALQGKVTIGTRSVIAKGKTFKTLGSNINKIISHESLPTNEYLLLELGDFKQN.

The tract at residues 33 to 54 is disordered; sequence EQTASNNSSTDENQTSINNEPP. Positions 128–226 constitute a PPIase FKBP-type domain; the sequence is GHVVTVFYQI…SNEVKIYDDE (99 aa).

The catalysed reaction is [protein]-peptidylproline (omega=180) = [protein]-peptidylproline (omega=0). The sequence is that of Putative peptidyl-prolyl cis-trans isomerase RC0542 from Rickettsia conorii (strain ATCC VR-613 / Malish 7).